The chain runs to 207 residues: uncharacterized protein (207 aa).

This is an uncharacterized protein from Bacillus subtilis (strain 168).